The chain runs to 383 residues: 1-deoxy-D-xylulose 5-phosphate reductoisomerase (383 aa).

Positions 10, 11, 12, 13, 36, 37, 38, and 122 each coordinate NADPH. A 1-deoxy-D-xylulose 5-phosphate-binding site is contributed by Lys123. Glu124 lines the NADPH pocket. Position 148 (Asp148) interacts with Mn(2+). 1-deoxy-D-xylulose 5-phosphate is bound by residues Ser149, Glu150, Ser174, and His197. Position 150 (Glu150) interacts with Mn(2+). Gly203 serves as a coordination point for NADPH. 1-deoxy-D-xylulose 5-phosphate-binding residues include Ser210, Asn215, Lys216, and Glu219. Glu219 contacts Mn(2+).

The protein belongs to the DXR family. Requires Mg(2+) as cofactor. Mn(2+) is required as a cofactor.

It catalyses the reaction 2-C-methyl-D-erythritol 4-phosphate + NADP(+) = 1-deoxy-D-xylulose 5-phosphate + NADPH + H(+). It functions in the pathway isoprenoid biosynthesis; isopentenyl diphosphate biosynthesis via DXP pathway; isopentenyl diphosphate from 1-deoxy-D-xylulose 5-phosphate: step 1/6. Functionally, catalyzes the NADPH-dependent rearrangement and reduction of 1-deoxy-D-xylulose-5-phosphate (DXP) to 2-C-methyl-D-erythritol 4-phosphate (MEP). The sequence is that of 1-deoxy-D-xylulose 5-phosphate reductoisomerase from Bacillus pumilus (strain SAFR-032).